The sequence spans 439 residues: Glutamate--tRNA ligase 2 (439 aa).

The short motif at 9–19 (PSPTGHLHVGN) is the 'HIGH' region element. The short motif at 233 to 237 (KLSKR) is the 'KMSKS' region element. Residue K236 participates in ATP binding.

It belongs to the class-I aminoacyl-tRNA synthetase family. Glutamate--tRNA ligase type 1 subfamily. As to quaternary structure, monomer.

Its subcellular location is the cytoplasm. The enzyme catalyses tRNA(Glu) + L-glutamate + ATP = L-glutamyl-tRNA(Glu) + AMP + diphosphate. In terms of biological role, catalyzes the attachment of glutamate to tRNA(Glu) in a two-step reaction: glutamate is first activated by ATP to form Glu-AMP and then transferred to the acceptor end of tRNA(Glu). This is Glutamate--tRNA ligase 2 from Sphingopyxis alaskensis (strain DSM 13593 / LMG 18877 / RB2256) (Sphingomonas alaskensis).